Here is a 333-residue protein sequence, read N- to C-terminus: tRNA pseudouridine synthase B (333 aa).

Asp46 serves as the catalytic Nucleophile.

It belongs to the pseudouridine synthase TruB family. Type 1 subfamily.

The catalysed reaction is uridine(55) in tRNA = pseudouridine(55) in tRNA. Functionally, responsible for synthesis of pseudouridine from uracil-55 in the psi GC loop of transfer RNAs. The polypeptide is tRNA pseudouridine synthase B (Gluconobacter oxydans (strain 621H) (Gluconobacter suboxydans)).